The primary structure comprises 571 residues: Probable serine/threonine-protein kinase WNK4 (571 aa).

The 259-residue stretch at 19–277 (GRFAEILGRG…AKELLQDPFL (259 aa)) folds into the Protein kinase domain. Residues 99–102 (TELF) and K149 contribute to the ATP site. Catalysis depends on D166, which acts as the Proton acceptor. The disordered stretch occupies residues 396–425 (EDDETPHDHHRHRTDSFHSSSSHASSSQAS). The span at 412-425 (FHSSSSHASSSQAS) shows a compositional bias: low complexity. S522 bears the Phosphoserine mark.

Belongs to the protein kinase superfamily. Ser/Thr protein kinase family. WNK subfamily.

The enzyme catalyses L-seryl-[protein] + ATP = O-phospho-L-seryl-[protein] + ADP + H(+). The catalysed reaction is L-threonyl-[protein] + ATP = O-phospho-L-threonyl-[protein] + ADP + H(+). In terms of biological role, may regulate flowering time by modulating the photoperiod pathway. The protein is Probable serine/threonine-protein kinase WNK4 (WNK4) of Arabidopsis thaliana (Mouse-ear cress).